Reading from the N-terminus, the 385-residue chain is Enoyl-[acyl-carrier-protein] reductase, mitochondrial (385 aa).

Tyr-78 (proton donor) is an active-site residue. NADP(+)-binding positions include Asn-162, 190–193 (TSGV), 213–215 (RDR), 288–291 (YGGM), 313–315 (YWV), and Lys-378.

It belongs to the zinc-containing alcohol dehydrogenase family. Quinone oxidoreductase subfamily. Homodimer.

It localises to the mitochondrion matrix. The catalysed reaction is a 2,3-saturated acyl-[ACP] + NADP(+) = a (2E)-enoyl-[ACP] + NADPH + H(+). In terms of biological role, catalyzes the NADPH-dependent reduction of trans-2-enoyl thioesters in mitochondrial fatty acid synthesis (fatty acid synthesis type II). Fatty acid chain elongation in mitochondria uses acyl carrier protein (ACP) as an acyl group carrier, but the enzyme accepts both ACP and CoA thioesters as substrates in vitro. Required for respiration and the maintenance of the mitochondrial compartment. This chain is Enoyl-[acyl-carrier-protein] reductase, mitochondrial (ETR1), found in Candida glabrata (strain ATCC 2001 / BCRC 20586 / JCM 3761 / NBRC 0622 / NRRL Y-65 / CBS 138) (Yeast).